Here is a 297-residue protein sequence, read N- to C-terminus: Protoheme IX farnesyltransferase (297 aa).

8 helical membrane passes run 15 to 35, 39 to 59, 91 to 111, 112 to 132, 139 to 159, 166 to 186, 220 to 240, and 265 to 285; these read VVAL…PAPY, GLLV…AAVF, VWGV…VNII, TVVL…LYLK, IVIG…AVSG, ACLL…ALAI, LLLV…YLVI, and AWST…ALLF.

This sequence belongs to the UbiA prenyltransferase family. Protoheme IX farnesyltransferase subfamily.

Its subcellular location is the cell inner membrane. It catalyses the reaction heme b + (2E,6E)-farnesyl diphosphate + H2O = Fe(II)-heme o + diphosphate. Its pathway is porphyrin-containing compound metabolism; heme O biosynthesis; heme O from protoheme: step 1/1. Converts heme B (protoheme IX) to heme O by substitution of the vinyl group on carbon 2 of heme B porphyrin ring with a hydroxyethyl farnesyl side group. The sequence is that of Protoheme IX farnesyltransferase from Vesicomyosocius okutanii subsp. Calyptogena okutanii (strain HA).